We begin with the raw amino-acid sequence, 888 residues long: Glutamate receptor 3 (888 aa).

Positions 1–22 are cleaved as a signal peptide; it reads MGQSVLRAVFFLVLGLLGHSHG. Residues 23–546 lie on the Extracellular side of the membrane; the sequence is GFPNTISIGG…GVFSFLDPLA (524 aa). 5 N-linked (GlcNAc...) asparagine glycosylation sites follow: asparagine 57, asparagine 260, asparagine 374, asparagine 409, and asparagine 416. Cysteine 85 and cysteine 334 are joined by a disulfide. The L-glutamate site is built by proline 502, threonine 504, and arginine 509. Residues 547–567 form a helical membrane-spanning segment; it reads YEIWMCIVFAYIGVSVVLFLV. The Cytoplasmic portion of the chain corresponds to 568 to 596; the sequence is SRFSPYEWHLEDNNEEPRDPQSPPDPPNE. The helical; Pore-forming intramembrane region spans 597 to 612; it reads FGIFNSLWFSLGAFMQ. An intramembrane segment occupies 613–615; that stretch reads QGC. Cysteine 615 is lipidated: S-palmitoyl cysteine. Residues 616-621 lie on the Cytoplasmic side of the membrane; the sequence is DISPRS. The chain crosses the membrane as a helical span at residues 622–642; it reads LSGRIVGGVWWFFTLIIISSY. Residues 643 to 817 lie on the Extracellular side of the membrane; the sequence is TANLAAFLTV…DKTSALSLSN (175 aa). Residues serine 680, threonine 681, and glutamate 731 each contribute to the L-glutamate site. Cysteine 744 and cysteine 799 are disulfide-bonded. Residues 818-838 traverse the membrane as a helical segment; the sequence is VAGVFYILVGGLGLAMMVALI. Residues 839 to 888 lie on the Cytoplasmic side of the membrane; that stretch reads EFCYKSRAESKRMKLTKNTQNFKPAPATNTQNYATYREGYNVYGTESVKI. The S-palmitoyl cysteine moiety is linked to residue cysteine 841. Phosphotyrosine occurs at positions 871 and 881.

It belongs to the glutamate-gated ion channel (TC 1.A.10.1) family. GRIA3 subfamily. As to quaternary structure, homotetramer or heterotetramer of pore-forming glutamate receptor subunits. Tetramers may be formed by the dimerization of dimers. Interacts with PICK1, GRIP1 and GRIP2. Found in a complex with GRIA1, GRIA2, GRIA4, CNIH2, CNIH3, CACNG2, CACNG3, CACNG4, CACNG5, CACNG7 and CACNG8. Interacts with CACNG5. Found in a complex with GRIA1, GRIA2, GRIA4, DLG4, CACNG8 and CNIH2.

The protein resides in the cell membrane. It is found in the postsynaptic cell membrane. The protein localises to the postsynaptic density membrane. It carries out the reaction Ca(2+)(in) = Ca(2+)(out). In terms of biological role, ionotropic glutamate receptor that functions as a ligand-gated cation channel, gated by L-glutamate and glutamatergic agonists such as alpha-amino-3-hydroxy-5-methyl-4-isoxazolepropionic acid (AMPA), quisqualic acid, and kainic acid. L-glutamate acts as an excitatory neurotransmitter at many synapses in the central nervous system and plays an important role in fast excitatory synaptic transmission by inducing long-term potentiation. Binding of the excitatory neurotransmitter L-glutamate induces a conformation change, leading to the opening of the cation channel, and thereby converts the chemical signal to an electrical impulse upon entry of calcium. The receptor then desensitizes rapidly and enters a transient inactive state, characterized by the presence of bound agonist. In the presence of CACNG8, shows resensitization which is characterized by a delayed accumulation of current flux upon continued application of glutamate. The sequence is that of Glutamate receptor 3 from Mus musculus (Mouse).